A 652-amino-acid chain; its full sequence is Sodium-dependent phosphate transporter 1-A (652 aa).

Residues 1 to 25 (MESTTLASLAAVSVLAAGAQTDMSD) lie on the Cytoplasmic side of the membrane. Residues 26–46 (VLWLLILGFVIAFILAFSVGA) form a helical membrane-spanning segment. Over 47–66 (NDVANSFGTAVGSGVVTLRQ) the chain is Extracellular. Residues 67 to 87 (ACILATIFETVGAMLLGAKVS) traverse the membrane as a helical segment. The Cytoplasmic portion of the chain corresponds to 88-104 (ETIRSGIIDVHMYNGSE). Residues 105–125 (AVLMAGSISAMFGSAVWQLAA) traverse the membrane as a helical segment. The Extracellular portion of the chain corresponds to 126 to 162 (SFLKLPISGTHCIVGATIGFSMVARGHQGVKWLELLR). Residues 163 to 183 (IVASWFLSPLLSGIMSAVLFY) traverse the membrane as a helical segment. Residues 184–201 (FVRKFILNKDDPVPNGLR) lie on the Cytoplasmic side of the membrane. Residues 202 to 222 (ALPVFYAVTMGINLFSIMFTG) traverse the membrane as a helical segment. At 223 to 234 (APMLGFDRIPWW) the chain is on the extracellular side. A helical transmembrane segment spans residues 235–255 (GTLLISLGCAILTALVVWFIV). Over 256 to 482 (CPRLKKKMQS…IDELEIDKPE (227 aa)) the chain is Cytoplasmic. The segment at 278–308 (TQLVEKKPSSNGLMDHHPGPPRNYSPVPQTP) is disordered. Over residues 281 to 295 (VEKKPSSNGLMDHHP) the composition is skewed to basic and acidic residues. Over residues 297–308 (PPRNYSPVPQTP) the composition is skewed to pro residues. The chain crosses the membrane as a helical span at residues 483–503 (VSTLFQFLQILTACFGSFAHG). Topologically, residues 504–531 (GNDVSNAIGPLVALWLIYDSASVAPSAP) are extracellular. The chain crosses the membrane as a helical span at residues 532–552 (TPIWLLLYGGVGICTGLWIWG). Topologically, residues 553-571 (RRVIQTMGKDLTPITPSSG) are cytoplasmic. The chain crosses the membrane as a helical span at residues 572-592 (FSIELASAITVVVASNIGLPV). Topologically, residues 593–621 (STTHCKVGSVVSVGWLRSRKAVDWHLFRN) are extracellular. The chain crosses the membrane as a helical span at residues 622–642 (IFIAWFVTVPISGLISAAIMA). Topologically, residues 643–652 (LFYYVILPLT) are cytoplasmic.

The protein belongs to the inorganic phosphate transporter (PiT) (TC 2.A.20) family.

The protein resides in the membrane. Sodium-phosphate symporter which plays a fundamental housekeeping role in phosphate transport. This Danio rerio (Zebrafish) protein is Sodium-dependent phosphate transporter 1-A (slc20a1a).